We begin with the raw amino-acid sequence, 305 residues long: Ornithine carbamoyltransferase (305 aa).

Carbamoyl phosphate contacts are provided by residues 52–55 (STRT), glutamine 79, arginine 103, and 130–133 (HPCQ). L-ornithine contacts are provided by residues asparagine 161, aspartate 222, and 226–227 (SM). Residues 262–263 (CL) and arginine 290 each bind carbamoyl phosphate.

It belongs to the aspartate/ornithine carbamoyltransferase superfamily. OTCase family.

The protein localises to the cytoplasm. It catalyses the reaction carbamoyl phosphate + L-ornithine = L-citrulline + phosphate + H(+). It participates in amino-acid biosynthesis; L-arginine biosynthesis; L-arginine from L-ornithine and carbamoyl phosphate: step 1/3. Reversibly catalyzes the transfer of the carbamoyl group from carbamoyl phosphate (CP) to the N(epsilon) atom of ornithine (ORN) to produce L-citrulline. This chain is Ornithine carbamoyltransferase, found in Pelobacter propionicus (strain DSM 2379 / NBRC 103807 / OttBd1).